The chain runs to 461 residues: Cysteine--tRNA ligase (461 aa).

Position 29 (Cys-29) interacts with Zn(2+). The short motif at 31–41 (MTIYDLCHVGH) is the 'HIGH' region element. Residues Cys-213, His-238, and Glu-242 each contribute to the Zn(2+) site. A 'KMSKS' region motif is present at residues 274 to 278 (KMSKS). Residue Lys-277 coordinates ATP.

It belongs to the class-I aminoacyl-tRNA synthetase family. Monomer. The cofactor is Zn(2+).

It is found in the cytoplasm. The enzyme catalyses tRNA(Cys) + L-cysteine + ATP = L-cysteinyl-tRNA(Cys) + AMP + diphosphate. This is Cysteine--tRNA ligase from Methylibium petroleiphilum (strain ATCC BAA-1232 / LMG 22953 / PM1).